The primary structure comprises 266 residues: Large ribosomal subunit protein uL3 (266 aa).

A disordered region spans residues 124–149; that stretch reads NQKIGPKSHGGGGGSKPVRQTGSLGD.

It belongs to the universal ribosomal protein uL3 family. In terms of assembly, part of the 50S ribosomal subunit. Forms a cluster with proteins L14 and L19.

Functionally, one of the primary rRNA binding proteins, it binds directly near the 3'-end of the 23S rRNA, where it nucleates assembly of the 50S subunit. The sequence is that of Large ribosomal subunit protein uL3 from Mycoplasmopsis pulmonis (strain UAB CTIP) (Mycoplasma pulmonis).